Reading from the N-terminus, the 293-residue chain is MRFVIVTGLSGAGKTQAIRNLEDLGFFCVDNLPPTLIPKFAEACYQTDGKIDKIALVIDIRGGQFFDDIFESLNYLQKQGYKYEILFLDASDEVLIKRFKESRRKHPLAPDGRILNGILMERSRLREIKDRSDNIIDTSKLATRELREEITRIYSEEGQMETQLIVTVLSFGFKYGIPVDSDLVFDVRFLPNPFYIPELKNHSGRDKIVVDYIMDFKETVKFIDKLEDMLEFLIPNYLKEGKRQLIVSIGCTGGRHRSVTIANTIYNRLKDNGHRVNIDHRDIEEDIKGGKKL.

8 to 15 (GLSGAGKT) is an ATP binding site. 59 to 62 (DIRG) contacts GTP.

This sequence belongs to the RapZ-like family.

Functionally, displays ATPase and GTPase activities. This is Nucleotide-binding protein CKR_3143 from Clostridium kluyveri (strain NBRC 12016).